A 422-amino-acid polypeptide reads, in one-letter code: CRISPR-associated endodeoxyribonuclease Cas12f1 (422 aa).

The tract at residues 1 to 126 (MIKVYRYEIV…PSYKRDIPLD (126 aa)) is recognition domain (REC). The segment at 127 to 211 (LIKENISVNR…YLNISYDFEP (85 aa)) is wedge domain (WED). A linker region spans residues 212 to 220 (QTRVLDLNK). The interval 221–370 (IMGIDLGVAV…IKIDPQYTSQ (150 aa)) is ruvC-I. Active-site residues include aspartate 225 and glutamate 324. Residues 371–399 (RCSECGNIDSGNRIGQAIFKCRACGYEAN) form a target nucleic acid-binding (TNB) region. Zn(2+)-binding residues include cysteine 372, cysteine 375, cysteine 391, and cysteine 394. A ruvC-II region spans residues 400 to 420 (ADYNAARNIAIPNIDKIIAES). The active site involves aspartate 401.

The protein belongs to the CRISPR-associated endonuclease Cas12f family. An asymmetric homodimer. Guide RNA is probably required for dimerization. Mg(2+) serves as cofactor. The cofactor is Zn(2+).

In terms of biological role, CRISPR (clustered regularly interspaced short palindromic repeat), is an adaptive immune system that provides protection against mobile genetic elements (viruses, transposable elements and conjugative plasmids). CRISPR clusters contain sequences complementary to antecedent mobile elements and target invading nucleic acids. CRISPR clusters are transcribed and processed into CRISPR RNA (crRNA), which requires a trans-encoded small RNA (tracrRNA), but not this protein. Recognizes a short motif in the CRISPR repeat sequences (the 5' PAM or protospacer adjacent motif, YTT in this organism) to help distinguish self versus nonself, as targets within the CRISPR locus do not have PAMs. Has dsDNA endonuclease activity upon expression in E.coli of this protein, a mini CRISPR array and the probable tracrRNA. Plasmid cleavage is centered around positions 19-24 base pairs 3' of PAM. The mini system protects E.coli against transformation by foreign plasmids. This chain is CRISPR-associated endodeoxyribonuclease Cas12f1, found in Sulfoacidibacillus thermotolerans (Acidibacillus sulfuroxidans).